The primary structure comprises 552 residues: Putative transport protein ECA4401 (552 aa).

Transmembrane regions (helical) follow at residues 4 to 24 (IALT…IGNW), 26 to 46 (IYGV…VGHV), 65 to 85 (FGLI…FFSS), 90 to 112 (GLRL…VMLH), and 158 to 178 (TGYA…MWLM). 2 RCK C-terminal domains span residues 191 to 276 (KQFE…VIGN) and 279 to 361 (ETSL…IVGN). The next 6 helical transmembrane spans lie at 371–391 (MLPV…PLMV), 393–413 (GFPV…ALVL), 439–459 (IVLF…DTLL), 464–484 (VWWI…VGIL), 493–513 (YLTL…LAFA), and 530–550 (VYPL…VLFL).

Belongs to the AAE transporter (TC 2.A.81) family. YidE subfamily.

The protein localises to the cell membrane. The protein is Putative transport protein ECA4401 of Pectobacterium atrosepticum (strain SCRI 1043 / ATCC BAA-672) (Erwinia carotovora subsp. atroseptica).